Consider the following 421-residue polypeptide: C2H2 type master regulator of conidiophore development brlA (421 aa).

2 consecutive C2H2-type zinc fingers follow at residues 309–333 (FKCK…MKSH) and 339–364 (HVCW…TKTH). Residues 379-421 (ESSPDYDPDFRGQLTPDGLPIRGSTLDDPMPNSREYSVDGLDD) form a disordered region.

The protein localises to the nucleus. In terms of biological role, brlA, abaA and wetA are pivotal regulators of conidiophore development and conidium maturation. They act individually and together to regulate their own expression and that of numerous other sporulation-specific genes. Binds promoters of target genes at brlA response elements (BREs) containing the conserved sequence 5'-(C/A)(A/G)AGGG(G/A)-3'. Required for conidiophores formation. Controls expression of abaA. This is C2H2 type master regulator of conidiophore development brlA from Aspergillus oryzae (strain ATCC 42149 / RIB 40) (Yellow koji mold).